A 267-amino-acid polypeptide reads, in one-letter code: MAAADDAQFPPPKVLTYPASTPPTLITQGAEGRLYKTTHLTRDRPCALKYRPPKPYRHPVLDARLTKARLSSEAKVLERCWREGVPVPAVYAMDPAAGWMMMEWIEGIPVRVGINEWLGDRPEEGAEIPQVADETPIVDLMKRIGAAIGALHKTGVVHGDLTTSNMMLRPRGFNPVDGAPGDEGKAGSVEGDVVLIDFGLATQSMSDEDRAVDLYVLERAFASTHPRAERLFATLLESYKSTFKKASSVLIKLEDVRMRGRKRSMLG.

Residues 20-267 (STPPTLITQG…MRGRKRSMLG (248 aa)) form the Protein kinase domain. ATP is bound by residues 26–34 (ITQGAEGRL) and lysine 49. Residue aspartate 160 is the Proton acceptor of the active site.

This sequence belongs to the protein kinase superfamily. BUD32 family. As to quaternary structure, component of the EKC/KEOPS complex composed of at least BUD32, CGI121, GON7, KAE1 and PCC1; the whole complex dimerizes.

Its subcellular location is the cytoplasm. It localises to the nucleus. The protein localises to the chromosome. The protein resides in the telomere. It carries out the reaction L-seryl-[protein] + ATP = O-phospho-L-seryl-[protein] + ADP + H(+). The catalysed reaction is L-threonyl-[protein] + ATP = O-phospho-L-threonyl-[protein] + ADP + H(+). Its function is as follows. Component of the EKC/KEOPS complex that is required for the formation of a threonylcarbamoyl group on adenosine at position 37 (t(6)A37) in tRNAs that read codons beginning with adenine. The complex is probably involved in the transfer of the threonylcarbamoyl moiety of threonylcarbamoyl-AMP (TC-AMP) to the N6 group of A37. BUD32 has ATPase activity in the context of the EKC/KEOPS complex and likely plays a supporting role to the catalytic subunit KAE1. The EKC/KEOPS complex also promotes both telomere uncapping and telomere elongation. The complex is required for efficient recruitment of transcriptional coactivators. This chain is EKC/KEOPS complex subunit BUD32 (BUD32), found in Chaetomium globosum (strain ATCC 6205 / CBS 148.51 / DSM 1962 / NBRC 6347 / NRRL 1970) (Soil fungus).